The primary structure comprises 541 residues: Pseudokinase FAM20A (541 aa).

A signal peptide spans 1–33 (MPGLRRDRLLTLLLLGALLSADLYFHLWPQVQR). Positions 38-90 (RERPRGCPCTGRASSLARDSAAAASDPGTIVHNFSRTEPRTEPAGGSHSGSSS) are disordered. Residues 49–63 (RASSLARDSAAAASD) show a composition bias toward low complexity. 3 N-linked (GlcNAc...) asparagine glycosylation sites follow: Asn-70, Asn-145, and Asn-287. Disulfide bonds link Cys-314/Cys-330, Cys-319/Cys-323, Cys-378/Cys-452, and Cys-453/Cys-512. Asn-388 carries an N-linked (GlcNAc...) asparagine glycan. Asn-538 carries N-linked (GlcNAc...) asparagine glycosylation.

Belongs to the FAM20 family. In terms of assembly, interacts with FAM20C; probably forming a heterotetramer of 2 subunits of FAM20A and 2 subunits of FAM20C. Post-translationally, N-glycosylated. As to expression, highly expressed in lung and liver. Intermediate levels in thymus and ovary.

Its subcellular location is the secreted. It localises to the golgi apparatus. The protein resides in the endoplasmic reticulum. Functionally, pseudokinase that acts as an allosteric activator of the Golgi serine/threonine protein kinase FAM20C and is involved in biomineralization of teeth. Forms a complex with FAM20C and increases the ability of FAM20C to phosphorylate the proteins that form the 'matrix' that guides the deposition of the enamel minerals. In Homo sapiens (Human), this protein is Pseudokinase FAM20A.